Consider the following 431-residue polypeptide: Tyrosine--tRNA ligase (431 aa).

Residue tyrosine 34 coordinates L-tyrosine. Residues proline 39–histidine 48 carry the 'HIGH' region motif. Residues tyrosine 171 and glutamine 175 each contribute to the L-tyrosine site. The short motif at lysine 231 to threonine 235 is the 'KMSKS' region element. Lysine 234 provides a ligand contact to ATP. Residues isoleucine 353 to lysine 422 form the S4 RNA-binding domain.

This sequence belongs to the class-I aminoacyl-tRNA synthetase family. TyrS type 1 subfamily. In terms of assembly, homodimer.

It is found in the cytoplasm. It catalyses the reaction tRNA(Tyr) + L-tyrosine + ATP = L-tyrosyl-tRNA(Tyr) + AMP + diphosphate + H(+). In terms of biological role, catalyzes the attachment of tyrosine to tRNA(Tyr) in a two-step reaction: tyrosine is first activated by ATP to form Tyr-AMP and then transferred to the acceptor end of tRNA(Tyr). This chain is Tyrosine--tRNA ligase, found in Neisseria gonorrhoeae (strain ATCC 700825 / FA 1090).